The chain runs to 502 residues: Probable cytosol aminopeptidase (502 aa).

Mn(2+) contacts are provided by Lys269 and Asp274. Lys281 is an active-site residue. Asp292, Asp351, and Glu353 together coordinate Mn(2+). Arg355 is a catalytic residue.

Belongs to the peptidase M17 family. Requires Mn(2+) as cofactor.

Its subcellular location is the cytoplasm. The enzyme catalyses Release of an N-terminal amino acid, Xaa-|-Yaa-, in which Xaa is preferably Leu, but may be other amino acids including Pro although not Arg or Lys, and Yaa may be Pro. Amino acid amides and methyl esters are also readily hydrolyzed, but rates on arylamides are exceedingly low.. The catalysed reaction is Release of an N-terminal amino acid, preferentially leucine, but not glutamic or aspartic acids.. Presumably involved in the processing and regular turnover of intracellular proteins. Catalyzes the removal of unsubstituted N-terminal amino acids from various peptides. This is Probable cytosol aminopeptidase from Vibrio campbellii (strain ATCC BAA-1116).